A 248-amino-acid polypeptide reads, in one-letter code: mRNA-decapping protein OPG122 (248 aa).

A Nudix hydrolase domain is found at 45–227 (HKRVSVSAIL…IAKYALDTAK (183 aa)). Residues 125–147 (GGILKRGENVPECLSREIKEEVN) carry the Nudix box motif. Glutamate 132 contacts Mg(2+). Glutamate 141 functions as the Nucleophile in the catalytic mechanism. Glutamate 145 contacts Mn(2+). Aspartate 167 serves as a coordination point for Mg(2+).

It belongs to the Nudix hydrolase family. Mg(2+) serves as cofactor. Requires Mn(2+) as cofactor.

It localises to the host mitochondrion. Its function is as follows. Decapping enzyme that remove the protective 5'-cap from both host and viral mRNAs to commit transcripts for decay by the cellular exonuclease XRN1. Preferentially targets spliced mRNAs and since all viral genes are intronless, it preferentially targets host over viral transcripts. Acceleration of the turnover of cellular transcripts promotes the shutoff of host protein synthesis and therefore diminish the magnitude of antiviral response. In Variola virus (isolate Human/India/Ind3/1967) (VARV), this protein is mRNA-decapping protein OPG122 (OPG122).